Consider the following 345-residue polypeptide: Probable velvet family sexual development regulator LACBIDRAFT_317102 (345 aa).

2 stretches are compositionally biased toward polar residues: residues 1–13 (MFTT…SYRS) and 24–38 (EIQN…NPPR). 3 disordered regions span residues 1–43 (MFTT…TRRR), 138–189 (ESWT…SPSS), and 310–345 (RKRR…SDED). Residues 62-306 (GQTIRAELDE…ARWGVRLNIR (245 aa)) enclose the Velvet domain. 2 stretches are compositionally biased toward low complexity: residues 141-158 (TSRS…PTLS) and 167-184 (SSPQ…ASTP). The span at 336 to 345 (SEDDEASDED) shows a compositional bias: acidic residues.

This sequence belongs to the velvet family.

Its subcellular location is the nucleus. Functionally, velvet-domain-containing protein that probably acts as a positive regulator of sexual development. This is Probable velvet family sexual development regulator LACBIDRAFT_317102 from Laccaria bicolor (strain S238N-H82 / ATCC MYA-4686) (Bicoloured deceiver).